Here is a 103-residue protein sequence, read N- to C-terminus: Large ribosomal subunit protein bL21 (103 aa).

The protein belongs to the bacterial ribosomal protein bL21 family. As to quaternary structure, part of the 50S ribosomal subunit. Contacts protein L20.

This protein binds to 23S rRNA in the presence of protein L20. This Pectobacterium carotovorum subsp. carotovorum (strain PC1) protein is Large ribosomal subunit protein bL21.